The following is a 239-amino-acid chain: Proteasome activator complex subunit 2 (239 aa).

The residue at position 2 (Ala-2) is an N-acetylalanine. A Phosphoserine modification is found at Ser-10. A disordered region spans residues 65-86; the sequence is DIPIPDPPPKDDEMETDKQEKK. Residues 72–86 show a composition bias toward basic and acidic residues; that stretch reads PPKDDEMETDKQEKK.

It belongs to the PA28 family. In terms of assembly, heterodimer of PSME1 and PSME2, which forms a hexameric ring.

In terms of biological role, implicated in immunoproteasome assembly and required for efficient antigen processing. The PA28 activator complex enhances the generation of class I binding peptides by altering the cleavage pattern of the proteasome. The chain is Proteasome activator complex subunit 2 (PSME2) from Sus scrofa (Pig).